Reading from the N-terminus, the 298-residue chain is Protein FAM221A (298 aa).

Residues 241–257 show a composition bias toward polar residues; that stretch reads SSPETLTDVGTSSQVSS. The tract at residues 241–263 is disordered; that stretch reads SSPETLTDVGTSSQVSSLRRPEE.

Belongs to the FAM221 family.

This Homo sapiens (Human) protein is Protein FAM221A (FAM221A).